Consider the following 422-residue polypeptide: Acetyl-CoA acetyltransferase, mitochondrial (422 aa).

The transit peptide at 1–28 (MPVLAALLRRGPLLQRRVQEIRYAERSY) directs the protein to the mitochondrion. The residue at position 61 (K61) is an N6-acetyllysine; alternate. Position 61 is an N6-succinyllysine; alternate (K61). K73 bears the N6-succinyllysine mark. Catalysis depends on C121, which acts as the Acyl-thioester intermediate. K169, K176, K185, and K197 each carry N6-acetyllysine; alternate. K169, K176, K185, and K197 each carry N6-succinyllysine; alternate. Residue Y214 participates in CoA binding. Y214 serves as a coordination point for K(+). K218 is subject to N6-acetyllysine; alternate. N6-succinyllysine; alternate is present on K218. An N6-succinyllysine modification is found at K238. At K240 the chain carries N6-acetyllysine; alternate. Residue K240 is modified to N6-succinyllysine; alternate. K246 and K252 each carry N6-acetyllysine. Residues 253–255 (RVD) and K258 each bind CoA. K258 carries the post-translational modification N6-acetyllysine; alternate. K258 bears the N6-succinyllysine; alternate mark. N6-succinyllysine occurs at positions 261 and 263. Positions 275, 276, and 278 each coordinate K(+). Residue S279 coordinates CoA. K333 carries the post-translational modification N6-acetyllysine. A K(+)-binding site is contributed by V376. The Proton donor/acceptor role is filled by C408.

The protein belongs to the thiolase-like superfamily. Thiolase family. In terms of assembly, homotetramer. Succinylation at Lys-263, adjacent to a coenzyme A binding site. Desuccinylated by SIRT5.

The protein localises to the mitochondrion. It catalyses the reaction 2 acetyl-CoA = acetoacetyl-CoA + CoA. The catalysed reaction is propanoyl-CoA + acetyl-CoA = 2-methyl-3-oxobutanoyl-CoA + CoA. It participates in lipid metabolism; fatty acid beta-oxidation. With respect to regulation, activated by potassium ions, but not sodium ions. Its function is as follows. This is one of the enzymes that catalyzes the last step of the mitochondrial beta-oxidation pathway, an aerobic process breaking down fatty acids into acetyl-CoA. Using free coenzyme A/CoA, catalyzes the thiolytic cleavage of medium- to long-chain 3-oxoacyl-CoAs into acetyl-CoA and a fatty acyl-CoA shortened by two carbon atoms. The activity of the enzyme is reversible and it can also catalyze the condensation of two acetyl-CoA molecules into acetoacetyl-CoA. Thereby, it plays a major role in ketone body metabolism. In Bos taurus (Bovine), this protein is Acetyl-CoA acetyltransferase, mitochondrial (ACAT1).